The sequence spans 132 residues: Replication enhancer protein (132 aa).

Belongs to the geminiviridae replication enhancer protein family. In terms of assembly, homooligomer. Interacts with the replication-associated protein (REP). Interacts with host proliferating cell nuclear antigen (PCNA). Interacts with host retinoblastoma-related protein 1 (RBR1), and may thereby deregulate the host cell cycle. Oligomerization and interaction with PCNA are necessary for optimal replication enhancement.

In terms of biological role, increases viral DNA accumulation. Enhances infectivity and symptom expression. This chain is Replication enhancer protein, found in Macroptilium lathyroides (Lima bean).